Reading from the N-terminus, the 347-residue chain is Protein RecA (347 aa).

Residue 65–72 coordinates ATP; it reads GPESSGKT. The tract at residues 325-347 is disordered; sequence KLGISDGDVEETEDAPKSLFDEE. Residues 338–347 show a composition bias toward basic and acidic residues; the sequence is DAPKSLFDEE.

The protein belongs to the RecA family.

The protein resides in the cytoplasm. Functionally, can catalyze the hydrolysis of ATP in the presence of single-stranded DNA, the ATP-dependent uptake of single-stranded DNA by duplex DNA, and the ATP-dependent hybridization of homologous single-stranded DNAs. It interacts with LexA causing its activation and leading to its autocatalytic cleavage. This is Protein RecA from Staphylococcus aureus (strain Mu3 / ATCC 700698).